The sequence spans 495 residues: Sugar phosphate exchanger 3 (495 aa).

The chain crosses the membrane as a helical span at residues 16-36; it reads FSHHHMVVFLLTFFSYSLLHA. Asparagine 58 carries an N-linked (GlcNAc...) asparagine glycan. 5 helical membrane-spanning segments follow: residues 82–102, 114–134, 148–168, 178–198, and 210–230; these read TLFL…GLFI, WVLS…GTLT, LWIV…AVMG, VVFG…ACLA, and FLVT…GLLV. Asparagine 267 carries N-linked (GlcNAc...) asparagine glycosylation. Helical transmembrane passes span 298 to 318, 334 to 354, 358 to 378, 387 to 407, 429 to 449, and 453 to 473; these read LAYA…PFYL, IWYD…SDML, APVL…YSRS, LLMA…SSAI, GIVD…VSLI, and LGWM…VLFI.

It belongs to the major facilitator superfamily. Organophosphate:Pi antiporter (OPA) (TC 2.A.1.4) family. Interacts with ATRAID; the interaction is direct and both proteins are mutually dependent for their stability. In terms of processing, glycosylated.

It localises to the endoplasmic reticulum membrane. It is found in the lysosome membrane. Functionally, unlike the other SLC37 members, lacks glucose-6-phosphate antiporter activity. In osteoclasts, forms a transporter complex with ATRAID for nitrogen-containing-bisphophonates (N-BPs) required for releasing N-BP molecules that have trafficked to lysosomes through fluid-phase endocytosis into the cytosol. The sequence is that of Sugar phosphate exchanger 3 (SLC37A3) from Bos taurus (Bovine).